We begin with the raw amino-acid sequence, 40 residues long: Chaperonin HSP60, mitochondrial (40 aa).

Belongs to the chaperonin (HSP60) family.

The protein localises to the mitochondrion. In terms of biological role, implicated in mitochondrial protein import and macromolecular assembly. May facilitate the correct folding of imported proteins. May also prevent misfolding and promote the refolding and proper assembly of unfolded polypeptides generated under stress conditions in the mitochondrial matrix. The polypeptide is Chaperonin HSP60, mitochondrial (Solanum tuberosum (Potato)).